Reading from the N-terminus, the 156-residue chain is Nascent polypeptide-associated complex subunit beta (156 aa).

Disordered regions lie at residues 1–42 and 129–156; these read MPID…KDDT and QANE…AEVE. In terms of domain architecture, NAC-A/B spans 38-103; the sequence is NKDDTKLHNQ…AQEKNLQELF (66 aa).

Belongs to the NAC-beta family. As to quaternary structure, part of the nascent polypeptide-associated complex (NAC), consisting of EGD2 and EGD1. NAC associates with ribosomes via EGD1.

Its subcellular location is the cytoplasm. It localises to the nucleus. In terms of biological role, component of the nascent polypeptide-associated complex (NAC), a dynamic component of the ribosomal exit tunnel, protecting the emerging polypeptides from interaction with other cytoplasmic proteins to ensure appropriate nascent protein targeting. The NAC complex also promotes mitochondrial protein import by enhancing productive ribosome interactions with the outer mitochondrial membrane and blocks the inappropriate interaction of ribosomes translating non-secretory nascent polypeptides with translocation sites in the membrane of the endoplasmic reticulum. EGD1 may act as a transcription factor that exert a negative effect on the expression of several genes that are transcribed by RNA polymerase II. This is Nascent polypeptide-associated complex subunit beta (EGD1) from Candida glabrata (strain ATCC 2001 / BCRC 20586 / JCM 3761 / NBRC 0622 / NRRL Y-65 / CBS 138) (Yeast).